We begin with the raw amino-acid sequence, 504 residues long: ATP synthase subunit alpha 2 (504 aa).

ATP is bound at residue 169 to 176 (GDRQTGKT).

This sequence belongs to the ATPase alpha/beta chains family. In terms of assembly, F-type ATPases have 2 components, CF(1) - the catalytic core - and CF(0) - the membrane proton channel. CF(1) has five subunits: alpha(3), beta(3), gamma(1), delta(1), epsilon(1). CF(0) has three main subunits: a(1), b(2) and c(9-12). The alpha and beta chains form an alternating ring which encloses part of the gamma chain. CF(1) is attached to CF(0) by a central stalk formed by the gamma and epsilon chains, while a peripheral stalk is formed by the delta and b chains.

The protein localises to the cell membrane. It carries out the reaction ATP + H2O + 4 H(+)(in) = ADP + phosphate + 5 H(+)(out). In terms of biological role, produces ATP from ADP in the presence of a proton gradient across the membrane. The alpha chain is a regulatory subunit. The polypeptide is ATP synthase subunit alpha 2 (Listeria monocytogenes serovar 1/2a (strain ATCC BAA-679 / EGD-e)).